Here is a 153-residue protein sequence, read N- to C-terminus: Nucleoside diphosphate kinase 3 (153 aa).

6 residues coordinate ATP: Lys-11, Phe-59, Arg-87, Thr-93, Arg-104, and Asn-114. The active-site Pros-phosphohistidine intermediate is His-117.

It belongs to the NDK family. Homohexamer. Requires Mg(2+) as cofactor.

It is found in the plastid. It localises to the chloroplast thylakoid lumen. The catalysed reaction is a 2'-deoxyribonucleoside 5'-diphosphate + ATP = a 2'-deoxyribonucleoside 5'-triphosphate + ADP. It catalyses the reaction a ribonucleoside 5'-diphosphate + ATP = a ribonucleoside 5'-triphosphate + ADP. Major role in the synthesis of nucleoside triphosphates other than ATP. The ATP gamma phosphate is transferred to the NDP beta phosphate via a ping-pong mechanism, using a phosphorylated active-site intermediate. Shows the highest specificity towards GDP. The polypeptide is Nucleoside diphosphate kinase 3 (Spinacia oleracea (Spinach)).